The primary structure comprises 414 residues: Argininosuccinate synthase (414 aa).

ATP contacts are provided by residues 9–17 (AYSGGLDTS) and Ala-35. Tyr-86 and Ser-91 together coordinate L-citrulline. Residue 114-122 (SHGATGKGN) participates in ATP binding. The L-aspartate site is built by Thr-118, Asn-122, and Asp-123. An L-citrulline-binding site is contributed by Asn-122. Residues Arg-126, Ser-179, Ser-188, Glu-269, and Tyr-281 each contribute to the L-citrulline site.

This sequence belongs to the argininosuccinate synthase family. In terms of assembly, homotetramer.

It is found in the cytoplasm. The protein resides in the cytosol. The catalysed reaction is L-citrulline + L-aspartate + ATP = 2-(N(omega)-L-arginino)succinate + AMP + diphosphate + H(+). It participates in amino-acid biosynthesis; L-arginine biosynthesis; L-arginine from L-ornithine and carbamoyl phosphate: step 2/3. The protein operates within nitrogen metabolism; urea cycle; (N(omega)-L-arginino)succinate from L-aspartate and L-citrulline: step 1/1. In terms of biological role, one of the enzymes of the urea cycle, the metabolic pathway transforming neurotoxic amonia produced by protein catabolism into inocuous urea in the liver of ureotelic animals. Catalyzes the formation of arginosuccinate from aspartate, citrulline and ATP and together with ASL it is responsible for the biosynthesis of arginine in most body tissues. The protein is Argininosuccinate synthase of Danio rerio (Zebrafish).